The chain runs to 313 residues: Ribosomal RNA small subunit methyltransferase H (313 aa).

Residues 48–50 (GGH), aspartate 68, phenylalanine 102, aspartate 120, and glutamine 127 each bind S-adenosyl-L-methionine. The disordered stretch occupies residues 290–313 (TATEEEIDRNPRSRSAKLRAAARK). Residues 301–313 (RSRSAKLRAAARK) are compositionally biased toward basic residues.

The protein belongs to the methyltransferase superfamily. RsmH family.

The protein resides in the cytoplasm. It catalyses the reaction cytidine(1402) in 16S rRNA + S-adenosyl-L-methionine = N(4)-methylcytidine(1402) in 16S rRNA + S-adenosyl-L-homocysteine + H(+). Specifically methylates the N4 position of cytidine in position 1402 (C1402) of 16S rRNA. The polypeptide is Ribosomal RNA small subunit methyltransferase H (Koribacter versatilis (strain Ellin345)).